The primary structure comprises 224 residues: Small ribosomal subunit protein uS5 (224 aa).

The tract at residues 1–40 is disordered; sequence MAEQPAGGQGAGDSRDSRGDRDSRGRRGDGGRGGRDRDGD. Residues 13–40 are compositionally biased toward basic and acidic residues; sequence DSRDSRGDRDSRGRRGDGGRGGRDRDGD. The region spanning 44 to 107 is the S5 DRBM domain; sequence YLERVVAINR…EEARKGFFRV (64 aa).

The protein belongs to the universal ribosomal protein uS5 family. Part of the 30S ribosomal subunit. Contacts proteins S4 and S8.

With S4 and S12 plays an important role in translational accuracy. Its function is as follows. Located at the back of the 30S subunit body where it stabilizes the conformation of the head with respect to the body. The sequence is that of Small ribosomal subunit protein uS5 from Mycolicibacterium paratuberculosis (strain ATCC BAA-968 / K-10) (Mycobacterium paratuberculosis).